Consider the following 246-residue polypeptide: 3-deoxy-manno-octulosonate cytidylyltransferase (246 aa).

This sequence belongs to the KdsB family.

The protein resides in the cytoplasm. The catalysed reaction is 3-deoxy-alpha-D-manno-oct-2-ulosonate + CTP = CMP-3-deoxy-beta-D-manno-octulosonate + diphosphate. It functions in the pathway nucleotide-sugar biosynthesis; CMP-3-deoxy-D-manno-octulosonate biosynthesis; CMP-3-deoxy-D-manno-octulosonate from 3-deoxy-D-manno-octulosonate and CTP: step 1/1. It participates in bacterial outer membrane biogenesis; lipopolysaccharide biosynthesis. Activates KDO (a required 8-carbon sugar) for incorporation into bacterial lipopolysaccharide in Gram-negative bacteria. This chain is 3-deoxy-manno-octulosonate cytidylyltransferase, found in Bradyrhizobium sp. (strain BTAi1 / ATCC BAA-1182).